The sequence spans 695 residues: Parasporal crystal protein Cry18Ca (695 aa).

The protein belongs to the delta endotoxin family.

Functionally, binds to the brush border membrane vesicles of scarab larvae and damages the gut wall somehow to allow the vegetative cells of P.popilliae to enter the hemolymph. The polypeptide is Parasporal crystal protein Cry18Ca (cry18Ca) (Paenibacillus popilliae (Bacillus popilliae)).